The sequence spans 276 residues: Large ribosomal subunit protein uL2 (276 aa).

Residues 203–276 (NVSSGKAGRT…SDKFIVKRRK (74 aa)) form a disordered region. The segment covering 210–220 (GRTRWLGRRPQ) has biased composition (basic residues). Positions 265 to 276 (KPSDKFIVKRRK) are enriched in basic and acidic residues.

It belongs to the universal ribosomal protein uL2 family. Part of the 50S ribosomal subunit. Forms a bridge to the 30S subunit in the 70S ribosome.

In terms of biological role, one of the primary rRNA binding proteins. Required for association of the 30S and 50S subunits to form the 70S ribosome, for tRNA binding and peptide bond formation. It has been suggested to have peptidyltransferase activity; this is somewhat controversial. Makes several contacts with the 16S rRNA in the 70S ribosome. This chain is Large ribosomal subunit protein uL2, found in Coprothermobacter proteolyticus (strain ATCC 35245 / DSM 5265 / OCM 4 / BT).